The chain runs to 225 residues: VAVSIACALFNLKCKIYMGYKDIKRQSPNVFRMKLMGAEVISVRNGSGTLKDACNEALRDWSGNYQKSHYIIGTAAGPHPYPTIVKEFQKMIGEEAKKQILEQEKKLPDAIIACVGGGSNAIGIFSEFMNEKVDLIGVEPAGRGIETGKHGAPLNHGRTGIYFGMKSSLMQNQEGQIEKSWSISAGLDFPSVGPEHAWLHSINRAQYVSITDIEALEAFQILSKK.

It belongs to the TrpB family. Tetramer of two alpha and two beta chains. Pyridoxal 5'-phosphate is required as a cofactor.

It catalyses the reaction (1S,2R)-1-C-(indol-3-yl)glycerol 3-phosphate + L-serine = D-glyceraldehyde 3-phosphate + L-tryptophan + H2O. The protein operates within amino-acid biosynthesis; L-tryptophan biosynthesis; L-tryptophan from chorismate: step 5/5. The beta subunit is responsible for the synthesis of L-tryptophan from indole and L-serine. The polypeptide is Tryptophan synthase beta chain (trpB) (Buchnera aphidicola subsp. Rhopalosiphum maidis).